The chain runs to 206 residues: Riboflavin transporter RibU (206 aa).

6 consecutive transmembrane segments (helical) span residues 7-27, 42-62, 79-99, 113-133, 147-169, and 173-195; these read MVLI…ILQF, IIPV…IILF, WIGV…VWFF, IVLA…FYAL, IFAG…PTYL, and VLPF…VTVF.

Belongs to the prokaryotic riboflavin transporter (P-RFT) (TC 2.A.87) family. In terms of assembly, in E.coli forms a stable energy-coupling factor (ECF) transporter complex composed of 2 membrane-embedded substrate-binding protein (S component), 2 ATP-binding proteins (A and A' components) and 2 transmembrane proteins (T component), probably with a stoichiometry of 2:1:1:2. May be able to interact with more than 1 S component at a time.

It is found in the cell membrane. In terms of biological role, mediates riboflavin uptake, may also transport FMN and roseoflavin. Probably a riboflavin-binding protein that interacts with the energy-coupling factor (ECF) ABC-transporter complex. Unlike classic ABC transporters this ECF transporter provides the energy necessary to transport a number of different substrates. The substrates themselves are bound by transmembrane, not extracytoplasmic soluble proteins. Uptake of riboflavin into proteosomes containing EcfA1A2T and RibU has been demonstrated. Uptake requires hydrolyzable Mg-ATP. This Lactococcus lactis subsp. cremoris (strain MG1363) protein is Riboflavin transporter RibU (ribU).